Reading from the N-terminus, the 964-residue chain is Insulin receptor substrate 1 (964 aa).

The PH domain maps to glycine 8–arginine 109. The 115-residue stretch at tyrosine 122–asparagine 236 folds into the IRS-type PTB domain. The interval leucine 249–isoleucine 268 is disordered. Phosphoserine is present on residues serine 286, serine 287, and serine 342. Tyrosine 410 bears the Phosphotyrosine; by INSR mark. The YXXM motif 1 signature appears at tyrosine 410–methionine 413. The interval alanine 527–leucine 560 is disordered. A compositionally biased stretch (polar residues) spans serine 528–leucine 560. The residue at position 554 (serine 554) is a Phosphoserine. The short motif at tyrosine 640 to methionine 643 is the YXXM motif 2 element. Over residues glutamate 698–serine 712 the composition is skewed to basic and acidic residues. The disordered stretch occupies residues glutamate 698–histidine 735. Positions asparagine 713–glutamate 729 are enriched in polar residues. The residue at position 907 (tyrosine 907) is a Phosphotyrosine; by INSR. Positions alanine 921–threonine 964 are disordered. Phosphoserine occurs at positions 928 and 931. Residue tyrosine 944 is modified to Phosphotyrosine; by INSR. Residues serine 952–threonine 964 show a composition bias toward low complexity.

Bindings to phosphatidylinositol 3-kinase and SHP2.

In terms of biological role, activates phosphatidylinositol 3-kinase when bound to the regulatory p85 subunit. May mediate the control of various cellular processes by insulin-like peptides. When phosphorylated by the insulin receptor binds specifically to various cellular proteins containing SH2 domains. Involved in control of cell proliferation, cell size, and body and organ growth throughout development. Also has a role in a signaling pathway controlling the physiological response required to endure periods of low nutrient conditions. Insulin/insulin-like growth factor (IGF) signaling pathway has a role in regulating aging and is necessary in the ovary for vitellogenic maturation. The protein is Insulin receptor substrate 1 of Drosophila sechellia (Fruit fly).